The sequence spans 224 residues: Peroxiredoxin-6 (224 aa).

The Thioredoxin domain maps to 5-169; the sequence is LLLGDEAPNF…ILRVVDSLQL (165 aa). The segment at 31-40 is required and sufficient for targeting to lysosomes and lamellar bodies; the sequence is DSWGILFSHP. The residue at position 44 (T44) is a Phosphothreonine. C47 acts as the Cysteine sulfenic acid (-SOH) intermediate; for peroxidase activity in catalysis. K63 is modified (N6-acetyllysine). Y89 carries the phosphotyrosine modification. D140 acts as the For phospholipase activity in catalysis. At T177 the chain carries Phosphothreonine; by MAPK. K209 is modified (N6-acetyllysine; alternate). K209 is modified (N6-succinyllysine; alternate).

The protein belongs to the peroxiredoxin family. Prx6 subfamily. In terms of assembly, homodimer. Interacts with GSTP1; mediates PRDX6 glutathionylation and regeneration. Interacts with APEX1. Interacts with STH. May interact with FAM168B. May interact with HTR2A. In terms of processing, phosphorylation at Thr-177 by MAP kinases increases the phospholipase activity of the enzyme. Phosphorylated form exhibits a greater lysophosphatidylcholine acyltransferase activity compared to the non-phosphorylated form. Post-translationally, irreversibly inactivated by overoxidation of Cys-47 to sulfinic acid (Cys-SO(2)H) and sulfonic acid (Cys-SO(3)H) forms upon oxidative stress.

It localises to the cytoplasm. The protein localises to the lysosome. The catalysed reaction is a hydroperoxide + 2 glutathione = an alcohol + glutathione disulfide + H2O. It carries out the reaction a 1,2-diacyl-sn-glycero-3-phosphocholine + H2O = a 1-acyl-sn-glycero-3-phosphocholine + a fatty acid + H(+). It catalyses the reaction a 1-acyl-sn-glycero-3-phosphocholine + an acyl-CoA = a 1,2-diacyl-sn-glycero-3-phosphocholine + CoA. The enzyme catalyses 1-hexadecanoyl-sn-glycero-3-phosphocholine + hexadecanoyl-CoA = 1,2-dihexadecanoyl-sn-glycero-3-phosphocholine + CoA. The catalysed reaction is 1,2-dihexadecanoyl-sn-glycero-3-phosphocholine + H2O = 1-hexadecanoyl-sn-glycero-3-phosphocholine + hexadecanoate + H(+). Functionally, thiol-specific peroxidase that catalyzes the reduction of hydrogen peroxide and organic hydroperoxides to water and alcohols, respectively. Can reduce H(2)O(2) and short chain organic, fatty acid, and phospholipid hydroperoxides. Also has phospholipase activity, can therefore either reduce the oxidized sn-2 fatty acyl group of phospholipids (peroxidase activity) or hydrolyze the sn-2 ester bond of phospholipids (phospholipase activity). These activities are dependent on binding to phospholipids at acidic pH and to oxidized phospholipds at cytosolic pH. Plays a role in cell protection against oxidative stress by detoxifying peroxides and in phospholipid homeostasis. Exhibits acyl-CoA-dependent lysophospholipid acyltransferase which mediates the conversion of lysophosphatidylcholine (1-acyl-sn-glycero-3-phosphocholine or LPC) into phosphatidylcholine (1,2-diacyl-sn-glycero-3-phosphocholine or PC). Shows a clear preference for LPC as the lysophospholipid and for palmitoyl CoA as the fatty acyl substrate. The protein is Peroxiredoxin-6 (Prdx6) of Rattus norvegicus (Rat).